Reading from the N-terminus, the 352-residue chain is UDP-N-acetylglucosamine--N-acetylmuramyl-(pentapeptide) pyrophosphoryl-undecaprenol N-acetylglucosamine transferase (352 aa).

UDP-N-acetyl-alpha-D-glucosamine-binding positions include 13–15 (TGG), asparagine 125, arginine 161, serine 189, isoleucine 242, 261–266 (ALTVSE), and glutamine 286.

The protein belongs to the glycosyltransferase 28 family. MurG subfamily.

It localises to the cell inner membrane. It catalyses the reaction di-trans,octa-cis-undecaprenyl diphospho-N-acetyl-alpha-D-muramoyl-L-alanyl-D-glutamyl-meso-2,6-diaminopimeloyl-D-alanyl-D-alanine + UDP-N-acetyl-alpha-D-glucosamine = di-trans,octa-cis-undecaprenyl diphospho-[N-acetyl-alpha-D-glucosaminyl-(1-&gt;4)]-N-acetyl-alpha-D-muramoyl-L-alanyl-D-glutamyl-meso-2,6-diaminopimeloyl-D-alanyl-D-alanine + UDP + H(+). It participates in cell wall biogenesis; peptidoglycan biosynthesis. Its function is as follows. Cell wall formation. Catalyzes the transfer of a GlcNAc subunit on undecaprenyl-pyrophosphoryl-MurNAc-pentapeptide (lipid intermediate I) to form undecaprenyl-pyrophosphoryl-MurNAc-(pentapeptide)GlcNAc (lipid intermediate II). The chain is UDP-N-acetylglucosamine--N-acetylmuramyl-(pentapeptide) pyrophosphoryl-undecaprenol N-acetylglucosamine transferase from Erwinia tasmaniensis (strain DSM 17950 / CFBP 7177 / CIP 109463 / NCPPB 4357 / Et1/99).